The chain runs to 474 residues: Stabilizer of axonemal microtubules 1 (474 aa).

Mn stretches follow at residues K30–I64, P65–E97, N98–N131, K132–V165, R166–I199, P200–I232, P233–M266, P267–D299, S300–G332, R333–E366, P367–V400, and P401–E434. Residues P318–M350 are disordered. The interval K444 to A474 is disordered. The span at Q448–L457 shows a compositional bias: polar residues.

The protein belongs to the FAM154 family. In terms of assembly, associates with microtubules via the Mn regions.

It is found in the cytoplasm. The protein resides in the cytoskeleton. It localises to the microtubule organizing center. The protein localises to the centrosome. Its subcellular location is the centriole. It is found in the cilium basal body. The protein resides in the cilium axoneme. It localises to the flagellum axoneme. Its function is as follows. May play a role in the regulation of cilium length. Stabilizes microtubules at low temperature. The chain is Stabilizer of axonemal microtubules 1 (SAXO1) from Macaca fascicularis (Crab-eating macaque).